Here is a 382-residue protein sequence, read N- to C-terminus: S-adenosylmethionine synthase (382 aa).

His-15 is an ATP binding site. Asp-17 serves as a coordination point for Mg(2+). Glu-43 provides a ligand contact to K(+). The L-methionine site is built by Glu-56 and Gln-99. A flexible loop region spans residues 99-109 (QSPDINQGVDR). ATP contacts are provided by residues 164–166 (DAK), 230–231 (RF), Asp-239, 245–246 (RK), Ala-262, and Lys-266. Asp-239 is an L-methionine binding site. Lys-270 serves as a coordination point for L-methionine.

It belongs to the AdoMet synthase family. Homotetramer; dimer of dimers. It depends on Mg(2+) as a cofactor. The cofactor is K(+).

The protein resides in the cytoplasm. The catalysed reaction is L-methionine + ATP + H2O = S-adenosyl-L-methionine + phosphate + diphosphate. Its pathway is amino-acid biosynthesis; S-adenosyl-L-methionine biosynthesis; S-adenosyl-L-methionine from L-methionine: step 1/1. Catalyzes the formation of S-adenosylmethionine (AdoMet) from methionine and ATP. The overall synthetic reaction is composed of two sequential steps, AdoMet formation and the subsequent tripolyphosphate hydrolysis which occurs prior to release of AdoMet from the enzyme. In Psychromonas ingrahamii (strain DSM 17664 / CCUG 51855 / 37), this protein is S-adenosylmethionine synthase.